The chain runs to 412 residues: MKQWIAALLLMLIPGVQAAKPQKVTLMVDDVPVAQVLQALAEQEKLNLVVSPDVSGTVSLHLTDVPWKQALQTVVKSAGLITRQEGNILSVHSIAWQNNNIARQEAEQARAQANLPLENRSITLQYADAGELAKAGEKLLSAKGSMTVDKRTNRLLLRDNKTALSALEQWVAQMDLPVGQVELSAHIVTINEKSLRELGVKWTLADAQHAGGVGQVTTLGSDLSVATATTHVGFNIGRINGRLLDLELSALEQKQQLDIIASPRLLASHLQPASIKQGSEIPYQVSSGESGATSVEFKEAVLGMEVTPTVLQKGRIRLKLHISQNVPGQVLQQADGEVLAIDKQEIETQVEVKSGETLALGGIFTRKNKSGQDSVPLLGDIPWFGQLFRHDGKEDERRELVVFITPRLVSSE.

An N-terminal signal peptide occupies residues 1-18 (MKQWIAALLLMLIPGVQA).

It belongs to the bacterial secretin family. PilQ subfamily.

The protein localises to the cell outer membrane. Its function is as follows. Required for the use of extracellular DNA as a nutrient. Could be the porin responsible for transport of DNA across the outer membrane. The protein is DNA utilization protein HofQ (hofQ) of Escherichia coli (strain K12).